Consider the following 122-residue polypeptide: Large ribosomal subunit protein uL18 (122 aa).

This sequence belongs to the universal ribosomal protein uL18 family. As to quaternary structure, part of the 50S ribosomal subunit; part of the 5S rRNA/L5/L18/L25 subcomplex. Contacts the 5S and 23S rRNAs.

This is one of the proteins that bind and probably mediate the attachment of the 5S RNA into the large ribosomal subunit, where it forms part of the central protuberance. The protein is Large ribosomal subunit protein uL18 of Lachnospira eligens (strain ATCC 27750 / DSM 3376 / VPI C15-48 / C15-B4) (Eubacterium eligens).